The sequence spans 302 residues: MLRTIGSHLDFSDSGIIKCIQQGCTFSAISAGINQCPIHFTVHVCHAVRNGTCEQLKRKIAVLLGESSPQFCFFDNGRADPEVEPVRGITGKIIAGLDQKFKEAIVFGHGGDYNPTPNLTHKITKYHMLRKRFVIDALAPLVSFHNVIDIIQRSNGVTRQDRTKYRQIWETIEEGALSHNVEQEVCRYVKILSSFLYHADLRVLLMTYNKIKNSRHASDDLRDFYLVPFLCIHKLITDKYRTTDLLINFLFKKSESVNQRMFTQFNKVLHRIYDAKLVKDICYVAWGSEIITALEALNVHIG.

This is an uncharacterized protein from Ictaluridae (bullhead catfishes).